A 349-amino-acid polypeptide reads, in one-letter code: Dehydrogenase FPY6 (349 aa).

It belongs to the Gfo/Idh/MocA family.

Its pathway is secondary metabolite biosynthesis. Its function is as follows. Dehydrogenase; part of the gene cluster that mediates the biosynthesis of the gamma-pyrones fusapyrone (FPY) and deoxyfusapyrone (dFPY). FPY is an undecaketide and thus likely synthesized by the polyketide synthase FPY1 from acetyl-CoA functioning as starter unit and the addition of 10 malonyl-CoA extender units by successive Claisen-condensations. Next to this, FPY shares some rare features: C-glycosylated 4-deoxyglucose at C-3, a gem-dimethyl group at C-13, and an alpha-beta to beta-gamma double bond shift at C-20. During FPY biosynthesis mono-C-methyl groups are transferred to the tetra-, penta-, hexa- and heptaketide, while two C-methyl groups are transferred to the nonaketide, suggesting that the CMet domain is programmed to selectively catalyze two successive C-alpha-methylation reactions of the nonaketide, while other alpha-carbons are non- or mono-methylated only. While the origin of the 4'-deoxyglucose moiety remains opaque, its transfer to C-3 is most likely mediated by the C-glycosyltransferase FPY2. Next to this, the hydroxyl group present at C-33 and discriminating between FPY and dFPY, is likely to be installed by the cytochrome P450 monooxygenase FPY7. No putative function can be predicted for the remaining genes FPY3-FPY6. The polypeptide is Dehydrogenase FPY6 (Fusarium mangiferae (Mango malformation disease fungus)).